The sequence spans 257 residues: Triosephosphate isomerase (257 aa).

Substrate is bound by residues Asn11 and Lys13. Residue His96 is the Electrophile of the active site. The Proton acceptor role is filled by Glu170.

Belongs to the triosephosphate isomerase family. In terms of assembly, homodimer.

It catalyses the reaction D-glyceraldehyde 3-phosphate = dihydroxyacetone phosphate. It participates in carbohydrate biosynthesis; gluconeogenesis. It functions in the pathway carbohydrate degradation; glycolysis; D-glyceraldehyde 3-phosphate from glycerone phosphate: step 1/1. The protein is Triosephosphate isomerase of Giardia intestinalis (Giardia lamblia).